Consider the following 102-residue polypeptide: Small ribosomal subunit protein uS10 (102 aa).

This sequence belongs to the universal ribosomal protein uS10 family. As to quaternary structure, part of the 30S ribosomal subunit.

Involved in the binding of tRNA to the ribosomes. This Streptomyces griseus subsp. griseus (strain JCM 4626 / CBS 651.72 / NBRC 13350 / KCC S-0626 / ISP 5235) protein is Small ribosomal subunit protein uS10.